Reading from the N-terminus, the 150-residue chain is Regulatory protein RecX (150 aa).

The protein belongs to the RecX family.

Its subcellular location is the cytoplasm. In terms of biological role, modulates RecA activity. This Legionella pneumophila (strain Corby) protein is Regulatory protein RecX.